The following is a 484-amino-acid chain: UDP-N-acetylmuramate--L-alanine ligase (484 aa).

128–134 (GTHGKTT) lines the ATP pocket.

It belongs to the MurCDEF family.

It localises to the cytoplasm. The catalysed reaction is UDP-N-acetyl-alpha-D-muramate + L-alanine + ATP = UDP-N-acetyl-alpha-D-muramoyl-L-alanine + ADP + phosphate + H(+). It participates in cell wall biogenesis; peptidoglycan biosynthesis. Its function is as follows. Cell wall formation. The chain is UDP-N-acetylmuramate--L-alanine ligase from Shewanella loihica (strain ATCC BAA-1088 / PV-4).